The sequence spans 100 residues: Small ribosomal subunit protein uS14c (100 aa).

This sequence belongs to the universal ribosomal protein uS14 family. As to quaternary structure, part of the 30S ribosomal subunit.

It localises to the plastid. The protein localises to the chloroplast. Binds 16S rRNA, required for the assembly of 30S particles. This chain is Small ribosomal subunit protein uS14c, found in Citrus sinensis (Sweet orange).